The chain runs to 395 residues: Putative 8-amino-7-oxononanoate synthase (395 aa).

Position 23 (arginine 23) interacts with substrate. 110-111 (GY) contacts pyridoxal 5'-phosphate. Histidine 135 is a binding site for substrate. Pyridoxal 5'-phosphate is bound by residues serine 182, 207–210 (DEAH), and 239–242 (TFSK). An N6-(pyridoxal phosphate)lysine modification is found at lysine 242. Position 356 (threonine 356) interacts with substrate.

Belongs to the class-II pyridoxal-phosphate-dependent aminotransferase family. BioF subfamily. In terms of assembly, homodimer. The cofactor is pyridoxal 5'-phosphate.

It carries out the reaction 6-carboxyhexanoyl-[ACP] + L-alanine + H(+) = (8S)-8-amino-7-oxononanoate + holo-[ACP] + CO2. It participates in cofactor biosynthesis; biotin biosynthesis. Catalyzes the decarboxylative condensation of pimeloyl-[acyl-carrier protein] and L-alanine to produce 8-amino-7-oxononanoate (AON), [acyl-carrier protein], and carbon dioxide. This is Putative 8-amino-7-oxononanoate synthase (bioF) from Bacillus cereus (strain B4264).